A 318-amino-acid chain; its full sequence is MTTMNLLLLIMSTLAAMAFLTLVERKLLGYMQLRKGPNIVGPYGLLQPFADAMKLFTKEPLKPSTSSTILYITAPALAFSIALLLWTPLPMPNPLINFNLGLLFILATSSLTVYSILWSGWASNSNYALIGALRAVAQMISYEVTLSIILLSILLTSGSFNLNMLITTQEHLWLILPSWPLAMMWFTSTLAETNRTPFDLMEGESELVSGFNIEYSAGPFALFFMAEYMNIIMMNALTTTIFLGTFYPTHSPELFTTSFTIKTLLLTSLFLWIRAAYPRFRYDQLMHLLWKSFLPLTLALLMWSTSMPIAISSIPPQT.

The next 8 helical transmembrane spans lie at 3–23 (TMNL…LTLV), 69–89 (ILYI…WTPL), 98–118 (FNLG…SILW), 135–155 (AVAQ…SILL), 171–191 (HLWL…STLA), 217–237 (AGPF…MNAL), 253–273 (ELFT…FLWI), and 294–314 (LPLT…ISSI).

This sequence belongs to the complex I subunit 1 family. Core subunit of respiratory chain NADH dehydrogenase (Complex I) which is composed of 45 different subunits.

It localises to the mitochondrion inner membrane. It catalyses the reaction a ubiquinone + NADH + 5 H(+)(in) = a ubiquinol + NAD(+) + 4 H(+)(out). Core subunit of the mitochondrial membrane respiratory chain NADH dehydrogenase (Complex I) which catalyzes electron transfer from NADH through the respiratory chain, using ubiquinone as an electron acceptor. Essential for the catalytic activity and assembly of complex I. This chain is NADH-ubiquinone oxidoreductase chain 1 (MT-ND1), found in Papio hamadryas (Hamadryas baboon).